We begin with the raw amino-acid sequence, 187 residues long: Cell division protein SepF (187 aa).

Residues 21-97 (EVEVPDKQQQ…ATPNNASQES (77 aa)) are disordered. 2 stretches are compositionally biased toward polar residues: residues 38–63 (EQSQQTTKQNAIKSVPQKSASRYTTT) and 70–97 (RMSNYSKNNSRNVVTMNNATPNNASQES).

It belongs to the SepF family. In terms of assembly, homodimer. Interacts with FtsZ.

The protein localises to the cytoplasm. Cell division protein that is part of the divisome complex and is recruited early to the Z-ring. Probably stimulates Z-ring formation, perhaps through the cross-linking of FtsZ protofilaments. Its function overlaps with FtsA. The sequence is that of Cell division protein SepF from Staphylococcus aureus (strain MRSA252).